A 77-amino-acid chain; its full sequence is uncharacterized protein (77 aa).

Transmembrane regions (helical) follow at residues 3-23 and 35-55; these read FNFI…SFLF and IGAI…VALL.

The protein resides in the cell membrane. This is an uncharacterized protein from Haemophilus influenzae (strain ATCC 51907 / DSM 11121 / KW20 / Rd).